The following is a 315-amino-acid chain: Ribosomal RNA small subunit methyltransferase H (315 aa).

S-adenosyl-L-methionine is bound by residues 34–36 (GGH), Asp53, Asp100, and His107.

Belongs to the methyltransferase superfamily. RsmH family.

It is found in the cytoplasm. The enzyme catalyses cytidine(1402) in 16S rRNA + S-adenosyl-L-methionine = N(4)-methylcytidine(1402) in 16S rRNA + S-adenosyl-L-homocysteine + H(+). In terms of biological role, specifically methylates the N4 position of cytidine in position 1402 (C1402) of 16S rRNA. The polypeptide is Ribosomal RNA small subunit methyltransferase H (Treponema denticola (strain ATCC 35405 / DSM 14222 / CIP 103919 / JCM 8153 / KCTC 15104)).